A 136-amino-acid chain; its full sequence is MARTKQTARKSTGGKAPRKQLATKAARKSAPASGGVKKPHRYRPGTVALREIRRYQKSTELLIRRAPFQRLVREIAQDFKTDLRFQSSAVMALQEACEAYLVGLFEDTNLCAIHAKRVTIMPKDIQLARRIRGERA.

Residues 1-43 (MARTKQTARKSTGGKAPRKQLATKAARKSAPASGGVKKPHRYR) are disordered. N6,N6,N6-trimethyllysine; alternate is present on residues Lys-5 and Lys-10. 2 positions are modified to N6,N6-dimethyllysine; alternate: Lys-5 and Lys-10. Lys-5 and Lys-10 each carry N6-acetyllysine; alternate. Residue Lys-5 is modified to N6-methyllysine; alternate. Ser-11 is subject to Phosphoserine. N6-acetyllysine is present on residues Lys-15 and Lys-24. Lys-28 carries the post-translational modification N6,N6,N6-trimethyllysine; alternate. Position 28 is an N6,N6-dimethyllysine; alternate (Lys-28). Lys-28 is modified (N6-methyllysine; alternate). Ser-29 is modified (phosphoserine). Lys-37 carries the post-translational modification N6,N6,N6-trimethyllysine; alternate. Residue Lys-37 is modified to N6,N6-dimethyllysine; alternate. An N6-methyllysine; alternate modification is found at Lys-37. The residue at position 80 (Lys-80) is an N6-methyllysine.

The protein belongs to the histone H3 family. The nucleosome is a histone octamer containing two molecules each of H2A, H2B, H3 and H4 assembled in one H3-H4 heterotetramer and two H2A-H2B heterodimers. The octamer wraps approximately 147 bp of DNA. Interacts (via N-terminal tail mono-acetylated on Lys-15) with swsn-4 (via Bromo domain); the interaction is direct. Phosphorylated at Ser-11 and Ser-29 during M phase. Phosphorylation of Ser-11 requires air-2 but not air-1. Dephosphorylated by gsp-1 and/or gsp-2 during chromosome segregation. In terms of processing, acetylation is generally linked to gene activation. Post-translationally, methylation at Lys-5 is linked to gene activation and is absent from male inactive X chromosome chromatin. Methylation at Lys-10 is linked to gene repression and is enriched in male inactive X chromosome chromatin. Methylation at Lys-37 occurs on the entire length of autosomes during meiotic prophase. Trimethylation at Lys-10 and Lys-37 is specifically antagonized by jmjd-2. Dimethylation and trimethylation at Lys-28 occurs in all nuclei. The mes-2-mes-3-mes-6 complex may be responsible for Lys-28 methylation in most of the germline and in the early embryo.

The protein resides in the nucleus. It is found in the chromosome. Core component of nucleosome. Nucleosomes wrap and compact DNA into chromatin, limiting DNA accessibility to the cellular machineries which require DNA as a template. Histones thereby play a central role in transcription regulation, DNA repair, DNA replication and chromosomal stability. DNA accessibility is regulated via a complex set of post-translational modifications of histones, also called histone code, and nucleosome remodeling. The polypeptide is Histone H3 (his-2) (Caenorhabditis elegans).